A 154-amino-acid chain; its full sequence is Decarboxylase claH (154 aa).

It belongs to the tpcK family.

The catalysed reaction is atrochrysone carboxylate + H(+) = atrochrysone + CO2. Its pathway is pigment biosynthesis. Decarboxylase involved in the biosynthesis of the bianthraquinone cladofulvin, a conidial pigment not required for virulence but that plays a role in fitness and resistance to environmental stresses including UV light and low-temperature stress. The pathway begins with the synthesis of atrochrysone thioester by the polyketide synthase (PKS) claG. The atrochrysone carboxyl ACP thioesterase claF then breaks the thioester bond and releases the atrochrysone carboxylic acid from claG. This compound is decarboxylated by claH to yield emodin, which is further converted to chrysophanol hydroquinone by the reductase claC and the dehydratase claB. The cytochrome monooxygenase P450 claM then catalyzes the dimerization of nataloe-emodin to cladofulvin. The protein is Decarboxylase claH of Passalora fulva (Tomato leaf mold).